A 532-amino-acid polypeptide reads, in one-letter code: Protoporphyrinogen oxidase (532 aa).

FAD is bound by residues 9 to 14 (GSGISG), isoleucine 289, and 511 to 513 (VGI).

The protein belongs to the protoporphyrinogen/coproporphyrinogen oxidase family. Protoporphyrinogen oxidase subfamily. FAD is required as a cofactor.

It localises to the mitochondrion. The catalysed reaction is protoporphyrinogen IX + 3 O2 = protoporphyrin IX + 3 H2O2. The protein operates within porphyrin-containing compound metabolism; protoporphyrin-IX biosynthesis; protoporphyrin-IX from protoporphyrinogen-IX: step 1/1. Functionally, catalyzes the 6-electron oxidation of protoporphyrinogen-IX to form protoporphyrin-IX. This is Protoporphyrinogen oxidase (ppox) from Dictyostelium discoideum (Social amoeba).